The following is a 564-amino-acid chain: Pumilio homolog 9 (564 aa).

In terms of domain architecture, PUM-HD spans 222–564 (LEDTVLIGQG…KIFSKTILKK (343 aa)). Pumilio repeat units follow at residues 249-284 (EIYG…VILL), 285-320 (AIID…LIVS), 321-359 (VLTS…ALVK), 361-396 (GLKP…FVLE), 397-432 (AATK…RLVA), 433-469 (EISR…VQFR), 470-501 (MHYA…EIVR), and 502-539 (ELLC…KLVA).

The protein resides in the cytoplasm. Sequence-specific RNA-binding protein that regulates translation and mRNA stability by binding the 3'-UTR of target mRNAs. The chain is Pumilio homolog 9 (APUM9) from Arabidopsis thaliana (Mouse-ear cress).